Reading from the N-terminus, the 159-residue chain is Transcription elongation factor GreA (159 aa).

This sequence belongs to the GreA/GreB family.

Its function is as follows. Necessary for efficient RNA polymerase transcription elongation past template-encoded arresting sites. The arresting sites in DNA have the property of trapping a certain fraction of elongating RNA polymerases that pass through, resulting in locked ternary complexes. Cleavage of the nascent transcript by cleavage factors such as GreA or GreB allows the resumption of elongation from the new 3'terminus. GreA releases sequences of 2 to 3 nucleotides. The chain is Transcription elongation factor GreA from Buchnera aphidicola subsp. Cinara cedri (strain Cc).